The primary structure comprises 194 residues: Potassium-transporting ATPase KdpC subunit (194 aa).

Residues 12 to 34 traverse the membrane as a helical segment; sequence LFLLLLTGGVYPLLTTALGQWWF.

The protein belongs to the KdpC family. The system is composed of three essential subunits: KdpA, KdpB and KdpC.

It localises to the cell inner membrane. Its function is as follows. Part of the high-affinity ATP-driven potassium transport (or Kdp) system, which catalyzes the hydrolysis of ATP coupled with the electrogenic transport of potassium into the cytoplasm. This subunit acts as a catalytic chaperone that increases the ATP-binding affinity of the ATP-hydrolyzing subunit KdpB by the formation of a transient KdpB/KdpC/ATP ternary complex. The chain is Potassium-transporting ATPase KdpC subunit from Salmonella enteritidis PT4 (strain P125109).